A 510-amino-acid polypeptide reads, in one-letter code: Glycerol kinase (510 aa).

ADP is bound at residue Thr13. ATP is bound by residues Thr13 and Thr14. A sn-glycerol 3-phosphate-binding site is contributed by Thr13. Residue Arg17 coordinates ADP. Sn-glycerol 3-phosphate-binding residues include Arg83, Glu84, Tyr135, and Asp255. Glycerol-binding residues include Arg83, Glu84, Tyr135, Asp255, and Gln256. ADP contacts are provided by Thr277, Gly321, Gly421, and Asn425. 3 residues coordinate ATP: Thr277, Gly321, and Gly421.

Belongs to the FGGY kinase family.

It carries out the reaction glycerol + ATP = sn-glycerol 3-phosphate + ADP + H(+). Its pathway is polyol metabolism; glycerol degradation via glycerol kinase pathway; sn-glycerol 3-phosphate from glycerol: step 1/1. In terms of biological role, key enzyme in the regulation of glycerol uptake and metabolism. Catalyzes the phosphorylation of glycerol to yield sn-glycerol 3-phosphate. The sequence is that of Glycerol kinase from Haloarcula marismortui (strain ATCC 43049 / DSM 3752 / JCM 8966 / VKM B-1809) (Halobacterium marismortui).